We begin with the raw amino-acid sequence, 4080 residues long: Hybrid PKS-NRPS synthetase poxE (4080 aa).

Residues 8–442 form the Ketosynthase family 3 (KS3) domain; that stretch reads REPIAIVGSG…GTNAHAIIEA (435 aa). Residues Cys181, His320, and His362 each act as for beta-ketoacyl synthase activity in the active site. The malonyl-CoA:ACP transacylase (MAT) domain stretch occupies residues 554–878; that stretch reads VFTGQGAQWA…QRGMNDVEAM (325 aa). Positions 944–1078 are N-terminal hotdog fold; that stretch reads HPILGTRCPD…GRLVITYGPV (135 aa). In terms of domain architecture, PKS/mFAS DH spans 944-1246; sequence HPILGTRCPD…AVPLEATNAD (303 aa). Positions 945-1243 are dehydratase (DH) domain; it reads PILGTRCPDG…GIHAVPLEAT (299 aa). The Proton acceptor; for dehydratase activity role is filled by His976. The tract at residues 1093–1246 is C-terminal hotdog fold; sequence MVDVPSERFY…AVPLEATNAD (154 aa). The Proton donor; for dehydratase activity role is filled by Asp1152. Residues 1400 to 1585 form a methyltransferase (MT) domain region; it reads HFSDYLASVV…GVDTFTSDAD (186 aa). Residues 2118–2292 are ketoreductase (KR)domain; the sequence is TYWLVGLTGS…AGSVMNIGAI (175 aa). Positions 2399–2478 are peptidyl carrier protein; it reads TTDEIYEVIK…TIGEIIKFVL (80 aa). One can recognise a Carrier 1 domain in the interval 2405 to 2481; the sequence is EVIKECFIVK…EIIKFVLEKL (77 aa). Residue Ser2441 is modified to O-(pantetheine 4'-phosphoryl)serine. Residues 2488–2569 are disordered; that stretch reads SLGLSPPTGA…AASPSIHTEE (82 aa). A compositionally biased stretch (basic and acidic residues) spans 2511-2525; the sequence is VVVERRNVPRLEKKI. The segment covering 2528-2545 has biased composition (low complexity); it reads SAGSRTSSSVTGTSKSVS. Polar residues predominate over residues 2551 to 2565; the sequence is DTASSQTSEAASPSI. Residues 2607–3036 form a condensation region; sequence KEPLSFGQSR…DSKQPGGHVS (430 aa). The interval 3069–3478 is adenylation; it reads DMAKQYPQKL…DGRLRIEGRI (410 aa). Residues 3593–3673 form the Carrier 2 domain; the sequence is AHLNEAQAQM…KMALLIKPQE (81 aa). Residues 3598-3670 are thiolation; it reads AQAQMVQLWE…TLEKMALLIK (73 aa). Ser3633 carries the O-(pantetheine 4'-phosphoryl)serine modification. Residues 3740–3959 are reductase (RED) domain; sequence LTGATGFIGQ…DFVPVEQVVR (220 aa).

It in the C-terminal section; belongs to the NRP synthetase family.

Its pathway is secondary metabolite biosynthesis. In terms of biological role, hybrid PKS-NRPS synthetase; part of the gene cluster that mediates the biosynthesis of oxaleimides, cytotoxic compounds containing an unusual disubstituted succinimide moiety. The first step of the pathway is provided by the HR-PKS poxF that serves in a new mode of collaborative biosynthesis with the PKS-NRPS poxE, by providing the olefin containing amino acid substrate via the synthesis of an ACP-bound dec-4-enoate. The cytochrome P450 monooxygenase poxM-catalyzed oxidation at the alpha-position creates the enzyme-bound 2-hydroxydec-4-enoyl-ACP thioester, which may be prone to spontaneous hydrolysis to yield 2-hydroxydec-4-enoic acid due to increased electrophilicity of the carbonyl. 2-hydroxydec-4-enoic acid can then be further oxidized by poxM to yield the alpha-ketoacid 2-oxodec-4-enoicacid, which is reductively aminated by the aminotransferase poxL to yield (S,E)-2-aminodec-4-enoic acid. The Hybrid PKS-NRPS synthetase poxE then performs condensation between the octaketide product of its PKS modules and the amino group of (S,E)-2-aminodec-4-enoic acid which is activated and incorporated by the adenylation domain. The resulting aminoacyl product can be cyclized by the Diels-Alderase PoxQ and reductively released by the reductive (R) domain of poxE to yield an aldehyde intermediate. The released aldehyde is then substrate for a Knoevenagel condensation by the hydrolyase poxO followed by an oxidation at the 5-position of the pyrrolidone ring. The presence of the olefin from the amino acid building block allows for migration of the substituted allyl group to occur. This allylic transposition reaction takes place in a conjugate addition, semipinacol-like fashion to yield a succinimide intermediate. Iterative two-electron oxidations of the C7 methyl of the succinimide intermediate to the carboxylic acid can be catalyzed by one of two remaining cytochrome P450 monooxygenasess poxC or poxD to yield oxaleimide A. Subsequent oxidation yields the maleimide scaffold oxaleimide I. Both oxaleimide A and oxaleimide I can undergo oxidative modifications in the decalin ring to yield the series of products oxaleimides B to H. The chain is Hybrid PKS-NRPS synthetase poxE from Penicillium oxalicum (strain 114-2 / CGMCC 5302) (Penicillium decumbens).